The primary structure comprises 379 residues: Protein RecA (379 aa).

A compositionally biased stretch (low complexity) spans 1 to 14 (MSNEIKSISSSNSS). Residues 1–24 (MSNEIKSISSSNSSCPPNEARSGE) are disordered. ATP is bound at residue 84 to 91 (GPESSGKT).

This sequence belongs to the RecA family.

Its subcellular location is the cytoplasm. Functionally, can catalyze the hydrolysis of ATP in the presence of single-stranded DNA, the ATP-dependent uptake of single-stranded DNA by duplex DNA, and the ATP-dependent hybridization of homologous single-stranded DNAs. It interacts with LexA causing its activation and leading to its autocatalytic cleavage. The protein is Protein RecA of Prochlorococcus marinus (strain SARG / CCMP1375 / SS120).